We begin with the raw amino-acid sequence, 332 residues long: RNA polymerase principal sigma factor HrdD (332 aa).

The disordered stretch occupies residues 1 to 21 (MATRAVARRQPAASGETGAAG). The Polymerase core binding motif lies at 124 to 137 (DLIQEGNAGLVRAV). Positions 294-313 (LTEVGKQHGLTRERIRQIEK) form a DNA-binding region, H-T-H motif.

Belongs to the sigma-70 factor family.

Its function is as follows. Sigma factors are initiation factors that promote the attachment of RNA polymerase to specific initiation sites and are then released. The protein is RNA polymerase principal sigma factor HrdD (hrdD) of Streptomyces griseus.